The following is a 296-amino-acid chain: Acetylglutamate kinase (296 aa).

Substrate is bound by residues 69-70 (GG), arginine 91, and asparagine 192.

The protein belongs to the acetylglutamate kinase family. ArgB subfamily.

The protein localises to the cytoplasm. It carries out the reaction N-acetyl-L-glutamate + ATP = N-acetyl-L-glutamyl 5-phosphate + ADP. The protein operates within amino-acid biosynthesis; L-arginine biosynthesis; N(2)-acetyl-L-ornithine from L-glutamate: step 2/4. In terms of biological role, catalyzes the ATP-dependent phosphorylation of N-acetyl-L-glutamate. This chain is Acetylglutamate kinase, found in Ruthia magnifica subsp. Calyptogena magnifica.